Reading from the N-terminus, the 86-residue chain is Small ribosomal subunit protein uS17 (86 aa).

Belongs to the universal ribosomal protein uS17 family. In terms of assembly, part of the 30S ribosomal subunit.

One of the primary rRNA binding proteins, it binds specifically to the 5'-end of 16S ribosomal RNA. The polypeptide is Small ribosomal subunit protein uS17 (Streptococcus thermophilus (strain CNRZ 1066)).